Reading from the N-terminus, the 678-residue chain is PTS system glucose-specific EIICBA component (678 aa).

One can recognise a PTS EIIC type-1 domain in the interval 3 to 414; it reads KKLFGQLQRI…FKYKTPGRED (412 aa). Transmembrane regions (helical) follow at residues 16 to 36, 63 to 83, 89 to 109, 126 to 146, 170 to 190, 211 to 231, 273 to 293, 303 to 323, 329 to 349, 355 to 375, and 382 to 402; these read LMLP…GTAM, AGGI…AIGL, VAAI…GAFL, VLGI…GALA, FVPI…AWIW, LAVF…LHHI, FMQG…LAIY, VVAG…ITEP, LFVA…SFLI, VHLG…GVLP, and LVIP…RFLI. Residues 425 to 506 form the PTS EIIB type-1 domain; the sequence is SELPFNVLKA…SLIMKGEITK (82 aa). Cys-447 serves as the catalytic Phosphocysteine intermediate; for EIIB activity. The region spanning 547–651 is the PTS EIIA type-1 domain; that stretch reads DQVFAQKMMG…STVTPLIITN (105 aa). Catalysis depends on His-599, which acts as the Tele-phosphohistidine intermediate; for EIIA activity.

It is found in the cell membrane. It catalyses the reaction N(pros)-phospho-L-histidyl-[protein] + D-glucose(out) = D-glucose 6-phosphate(in) + L-histidyl-[protein]. Its function is as follows. The phosphoenolpyruvate-dependent sugar phosphotransferase system (sugar PTS), a major carbohydrate active transport system, catalyzes the phosphorylation of incoming sugar substrates concomitantly with their translocation across the cell membrane. This system is involved in glucose transport. The chain is PTS system glucose-specific EIICBA component (ptsG) from Staphylococcus saprophyticus subsp. saprophyticus (strain ATCC 15305 / DSM 20229 / NCIMB 8711 / NCTC 7292 / S-41).